Consider the following 161-residue polypeptide: Nucleotide-binding protein PSEEN4469 (161 aa).

The protein belongs to the YajQ family.

Nucleotide-binding protein. In Pseudomonas entomophila (strain L48), this protein is Nucleotide-binding protein PSEEN4469.